We begin with the raw amino-acid sequence, 341 residues long: tRNA N6-adenosine threonylcarbamoyltransferase (341 aa).

Residues histidine 119 and histidine 123 each contribute to the Fe cation site. Residues 141–145 (MVSGG), aspartate 174, glycine 187, and asparagine 279 each bind substrate. Aspartate 307 contributes to the Fe cation binding site.

It belongs to the KAE1 / TsaD family. Fe(2+) serves as cofactor.

The protein localises to the cytoplasm. It carries out the reaction L-threonylcarbamoyladenylate + adenosine(37) in tRNA = N(6)-L-threonylcarbamoyladenosine(37) in tRNA + AMP + H(+). Functionally, required for the formation of a threonylcarbamoyl group on adenosine at position 37 (t(6)A37) in tRNAs that read codons beginning with adenine. Is involved in the transfer of the threonylcarbamoyl moiety of threonylcarbamoyl-AMP (TC-AMP) to the N6 group of A37, together with TsaE and TsaB. TsaD likely plays a direct catalytic role in this reaction. This is tRNA N6-adenosine threonylcarbamoyltransferase from Oenococcus oeni (strain ATCC BAA-331 / PSU-1).